A 277-amino-acid polypeptide reads, in one-letter code: Tetrahydroxynaphthalene reductase PfmaG (277 aa).

The NADP(+) site is built by I36, D82, and N109. Active-site proton donor residues include S158, S159, and Y173. 4 residues coordinate NADP(+): Y173, K177, I206, and T208. K177 serves as the catalytic Lowers pKa of active site Tyr.

This sequence belongs to the short-chain dehydrogenases/reductases (SDR) family.

It carries out the reaction scytalone + NADP(+) = naphthalene-1,3,6,8-tetrol + NADPH + H(+). Its pathway is pigment biosynthesis; melanin biosynthesis. Tetrahydroxynaphthalene reductase; part of the gene cluster that mediates the biosynthesis of dihydroxynaphthalene (DHN)-melanin, a bluish-green pigment forming a dark layer in the conidial wall that protects the conidia from UV radiations. The first step of the pathway is the production of the pentaketide 1,3,6,8-tetrahydroxynaphthalene (1,3,6,8-THN or T4HN) by the polyketide synthase PfmaE though condensation of acetyl-CoA with malonyl-CoA. T4HN is not stable and easily oxidizes into the stable form flaviolin. T4HN is also substrate of the hydroxynaphthalene reductase PfmaG to yield scytalone. The scytalone dehydratase PfmaJ then reduces scytalone to 1,3,8-THN. 1,3,8-THN is then substrate of the hydroxynaphthalene reductase PfmaI to yield vermelone. Vermelone is further converted by the multicopper oxidase PfmaD to 1,8-DHN. Finally the laccase PFICI_06862 transforms 1,8-DHN to DHN-melanin. The roles of the 5-oxoprolinase PfmaA and the proline iminopeptidase PfmaB within the cluster have not been elucidated yet. The chain is Tetrahydroxynaphthalene reductase PfmaG from Pestalotiopsis fici (strain W106-1 / CGMCC3.15140).